Consider the following 20-residue polypeptide: Ferric reductase A (20 aa).

In terms of assembly, monomer.

The enzyme catalyses 2 a Fe(II)-siderophore + NAD(+) + H(+) = 2 a Fe(III)-siderophore + NADH. Functionally, reductase activity that acts on Fe(3+)-chelates and NADH as an electron donor and requires the presence of FMN for full activity. May play a role in iron uptake. This chain is Ferric reductase A (ferA), found in Paracoccus denitrificans.